A 458-amino-acid polypeptide reads, in one-letter code: LysM domain-containing protein ARB_05157 (458 aa).

The signal sequence occupies residues 1-19 (MVSLKVCFLLLASSELAFG). In terms of domain architecture, LysM 1 spans 157-203 (AFHLVKQGEDCGTISATYGITSAQFLAWNPSAGKDCTGLWANAYACV). Residues 210-232 (PPKTTSQAPQPTPTKPSNGIETP) form a disordered region. Residues 212-229 (KTTSQAPQPTPTKPSNGI) are compositionally biased toward polar residues. LysM domains lie at 245-291 (KFHL…YACV), 325-371 (KFYL…YSCV), and 409-455 (KFHF…YLCV).

It localises to the secreted. In terms of biological role, might have a role in sequestration of chitin oligosaccharides (breakdown products of fungal cell walls that are released during invasion and act as triggers of host immunity) to dampen host defense. The sequence is that of LysM domain-containing protein ARB_05157 from Arthroderma benhamiae (strain ATCC MYA-4681 / CBS 112371) (Trichophyton mentagrophytes).